Reading from the N-terminus, the 329-residue chain is GTP 3',8-cyclase (329 aa).

Residues 8–234 (AFARKFYYLR…QLRQRSDGPA (227 aa)) enclose the Radical SAM core domain. Arg-17 provides a ligand contact to GTP. [4Fe-4S] cluster is bound by residues Cys-24 and Cys-28. Tyr-30 serves as a coordination point for S-adenosyl-L-methionine. Cys-31 contacts [4Fe-4S] cluster. Residue Arg-68 coordinates GTP. Gly-72 lines the S-adenosyl-L-methionine pocket. Thr-99 is a binding site for GTP. An S-adenosyl-L-methionine-binding site is contributed by Ser-123. Lys-160 provides a ligand contact to GTP. Met-194 contributes to the S-adenosyl-L-methionine binding site. 2 residues coordinate [4Fe-4S] cluster: Cys-257 and Cys-260. 262–264 (RLR) serves as a coordination point for GTP. [4Fe-4S] cluster is bound at residue Cys-274.

It belongs to the radical SAM superfamily. MoaA family. In terms of assembly, monomer and homodimer. It depends on [4Fe-4S] cluster as a cofactor.

It carries out the reaction GTP + AH2 + S-adenosyl-L-methionine = (8S)-3',8-cyclo-7,8-dihydroguanosine 5'-triphosphate + 5'-deoxyadenosine + L-methionine + A + H(+). It functions in the pathway cofactor biosynthesis; molybdopterin biosynthesis. Catalyzes the cyclization of GTP to (8S)-3',8-cyclo-7,8-dihydroguanosine 5'-triphosphate. This Salmonella newport (strain SL254) protein is GTP 3',8-cyclase.